Consider the following 198-residue polypeptide: Recombination protein RecR (198 aa).

The segment at 57-72 adopts a C4-type zinc-finger fold; sequence CEKCNTFTEAQICEVC. Residues 80–175 enclose the Toprim domain; that stretch reads TLLCVVETPA…AVTRLARGVP (96 aa).

The protein belongs to the RecR family.

May play a role in DNA repair. It seems to be involved in an RecBC-independent recombinational process of DNA repair. It may act with RecF and RecO. The sequence is that of Recombination protein RecR from Burkholderia vietnamiensis (strain G4 / LMG 22486) (Burkholderia cepacia (strain R1808)).